The following is a 544-amino-acid chain: CTP synthase (544 aa).

Residues 1–266 form an amidoligase domain region; it reads MSTKFIFVTG…DYFVCRRFHL (266 aa). Residue S14 participates in CTP binding. S14 lines the UTP pocket. ATP-binding positions include 15–20 and D72; that span reads SLGKGI. The Mg(2+) site is built by D72 and E140. Residues 147-149, 187-192, and K223 each bind CTP; these read DIE and KTKPTQ. Residues 187-192 and K223 each bind UTP; that span reads KTKPTQ. In terms of domain architecture, Glutamine amidotransferase type-1 spans 291 to 542; sequence TIGMVGKYIE…VAAAHIHQKA (252 aa). G352 contributes to the L-glutamine binding site. Catalysis depends on C379, which acts as the Nucleophile; for glutamine hydrolysis. Residues 380-383, E403, and R470 contribute to the L-glutamine site; that span reads LGMQ. Active-site residues include H515 and E517.

This sequence belongs to the CTP synthase family. In terms of assembly, homotetramer.

The enzyme catalyses UTP + L-glutamine + ATP + H2O = CTP + L-glutamate + ADP + phosphate + 2 H(+). It carries out the reaction L-glutamine + H2O = L-glutamate + NH4(+). The catalysed reaction is UTP + NH4(+) + ATP = CTP + ADP + phosphate + 2 H(+). It participates in pyrimidine metabolism; CTP biosynthesis via de novo pathway; CTP from UDP: step 2/2. Allosterically activated by GTP, when glutamine is the substrate; GTP has no effect on the reaction when ammonia is the substrate. The allosteric effector GTP functions by stabilizing the protein conformation that binds the tetrahedral intermediate(s) formed during glutamine hydrolysis. Inhibited by the product CTP, via allosteric rather than competitive inhibition. Catalyzes the ATP-dependent amination of UTP to CTP with either L-glutamine or ammonia as the source of nitrogen. Regulates intracellular CTP levels through interactions with the four ribonucleotide triphosphates. The polypeptide is CTP synthase (Pseudoalteromonas translucida (strain TAC 125)).